A 413-amino-acid polypeptide reads, in one-letter code: Phosphoribosylamine--glycine ligase (413 aa).

An ATP-grasp domain is found at 108–310 (KQLMDKYRIP…LMQLIIDLEN (203 aa)). 134-190 (VETCDLPIVIKKDGLAAGKGVIIAFTREDALDGVKKIYQEEKGKVVFESYLEGEEFS) lines the ATP pocket. Residues glutamate 280 and asparagine 282 each coordinate Mg(2+).

Belongs to the GARS family. Requires Mg(2+) as cofactor. The cofactor is Mn(2+).

It carries out the reaction 5-phospho-beta-D-ribosylamine + glycine + ATP = N(1)-(5-phospho-beta-D-ribosyl)glycinamide + ADP + phosphate + H(+). Its pathway is purine metabolism; IMP biosynthesis via de novo pathway; N(1)-(5-phospho-D-ribosyl)glycinamide from 5-phospho-alpha-D-ribose 1-diphosphate: step 2/2. This chain is Phosphoribosylamine--glycine ligase, found in Staphylococcus epidermidis (strain ATCC 12228 / FDA PCI 1200).